The chain runs to 180 residues: MNPAPNLVMVGPMGAGKSCIGRRLAERFGLEFVDVDQAIVEQVGSSIPAIFAQHGEAGFRQHEADTLQALLEQDNKLISTGGGTVLDPHNRQRICARGFVVHLHVSVPTQLTRLARDRNRPLLQRADREQLLHAMAAHRTPLYHEVADLSLETDHFSPAEATAQLVLRLAAQWRMSSAPA.

An ATP-binding site is contributed by 14 to 19 (GAGKSC). Ser-18 provides a ligand contact to Mg(2+). Positions 36, 60, and 82 each coordinate substrate. Arg-120 serves as a coordination point for ATP. Arg-139 serves as a coordination point for substrate.

The protein belongs to the shikimate kinase family. In terms of assembly, monomer. Requires Mg(2+) as cofactor.

It localises to the cytoplasm. It catalyses the reaction shikimate + ATP = 3-phosphoshikimate + ADP + H(+). It participates in metabolic intermediate biosynthesis; chorismate biosynthesis; chorismate from D-erythrose 4-phosphate and phosphoenolpyruvate: step 5/7. Its function is as follows. Catalyzes the specific phosphorylation of the 3-hydroxyl group of shikimic acid using ATP as a cosubstrate. The polypeptide is Shikimate kinase (Xanthomonas oryzae pv. oryzae (strain PXO99A)).